The primary structure comprises 175 residues: Large ribosomal subunit protein uL10 (175 aa).

It belongs to the universal ribosomal protein uL10 family. As to quaternary structure, part of the ribosomal stalk of the 50S ribosomal subunit. The N-terminus interacts with L11 and the large rRNA to form the base of the stalk. The C-terminus forms an elongated spine to which L12 dimers bind in a sequential fashion forming a multimeric L10(L12)X complex.

Functionally, forms part of the ribosomal stalk, playing a central role in the interaction of the ribosome with GTP-bound translation factors. This Pelotomaculum thermopropionicum (strain DSM 13744 / JCM 10971 / SI) protein is Large ribosomal subunit protein uL10.